Here is a 382-residue protein sequence, read N- to C-terminus: MAKDKEKQSDDKLVLTEWQKRNIEFLKKKKQQAEEEKKLKEKLLSDKKAQQQAQNASEAVELKTDEKTDSQEIESETTSKPKKTKKVRQPKEKSATQIAFQKSLPVLLGALLLMAVSIFMITPYSKKKEFSVRGNHQTNLDELIKASKVKASDYWLTLLISPGQYERPILRTIPWVKSVHLSYHFPNHFLFNVIEFEIIAYAQVENGFQPILENGKRVDKVRASELPKSFLILNLKDEKAIQQLVKQLTTLPKKLVKNIKSVSLANSKTTADLLLIEMHDGNVVRVPQSQLTLKLPYYQKLKKNLENDSIVDMEVGIYTTTQEIENQPEVPLTPEQNAADKEGDKPGEHQEQTDNDSETPANQSSPQQTPPSPETVLEQAHG.

At 1–103 the chain is on the cytoplasmic side; sequence MAKDKEKQSD…SATQIAFQKS (103 aa). 2 stretches are compositionally biased toward basic and acidic residues: residues 36 to 49 and 60 to 70; these read EKKLKEKLLSDKKA and VELKTDEKTDS. A disordered region spans residues 36–92; it reads EKKLKEKLLSDKKAQQQAQNASEAVELKTDEKTDSQEIESETTSKPKKTKKVRQPKE. Residues 104–124 form a helical membrane-spanning segment; the sequence is LPVLLGALLLMAVSIFMITPY. The region spanning 125–196 is the POTRA domain; sequence SKKKEFSVRG…NHFLFNVIEF (72 aa). The Extracellular segment spans residues 125-382; it reads SKKKEFSVRG…PETVLEQAHG (258 aa). A disordered region spans residues 322-382; it reads QEIENQPEVP…PETVLEQAHG (61 aa). Residues 338–352 show a composition bias toward basic and acidic residues; it reads AADKEGDKPGEHQEQ.

This sequence belongs to the FtsQ/DivIB family. DivIB subfamily.

It localises to the cell membrane. Functionally, cell division protein that may be involved in stabilizing or promoting the assembly of the division complex. The protein is Cell division protein DivIB of Streptococcus pyogenes serotype M2 (strain MGAS10270).